Consider the following 329-residue polypeptide: DNA repair and recombination protein RadA (329 aa).

107 to 114 (GEFGSGKS) is a binding site for ATP.

Belongs to the eukaryotic RecA-like protein family.

Its function is as follows. Involved in DNA repair and in homologous recombination. Binds and assemble on single-stranded DNA to form a nucleoprotein filament. Hydrolyzes ATP in a ssDNA-dependent manner and promotes DNA strand exchange between homologous DNA molecules. In Methanocorpusculum labreanum (strain ATCC 43576 / DSM 4855 / Z), this protein is DNA repair and recombination protein RadA.